Consider the following 420-residue polypeptide: Dihydrolipoyllysine-residue succinyltransferase component of 2-oxoglutarate dehydrogenase complex (420 aa).

The 76-residue stretch at 3–78 folds into the Lipoyl-binding domain; the sequence is KINILVPDLP…ISQQTLGEIN (76 aa). Lys44 carries the N6-lipoyllysine modification. Active-site residues include His391 and Asp395.

The protein belongs to the 2-oxoacid dehydrogenase family. In terms of assembly, forms a 24-polypeptide structural core with octahedral symmetry. Part of the 2-oxoglutarate dehydrogenase (OGDH) complex composed of E1 (2-oxoglutarate dehydrogenase), E2 (dihydrolipoamide succinyltransferase) and E3 (dihydrolipoamide dehydrogenase); the complex contains multiple copies of the three enzymatic components (E1, E2 and E3). (R)-lipoate serves as cofactor.

The catalysed reaction is N(6)-[(R)-dihydrolipoyl]-L-lysyl-[protein] + succinyl-CoA = N(6)-[(R)-S(8)-succinyldihydrolipoyl]-L-lysyl-[protein] + CoA. The protein operates within amino-acid degradation; L-lysine degradation via saccharopine pathway; glutaryl-CoA from L-lysine: step 6/6. In terms of biological role, E2 component of the 2-oxoglutarate dehydrogenase (OGDH) complex which catalyzes the second step in the conversion of 2-oxoglutarate to succinyl-CoA and CO(2). The protein is Dihydrolipoyllysine-residue succinyltransferase component of 2-oxoglutarate dehydrogenase complex (sucB) of Buchnera aphidicola subsp. Acyrthosiphon pisum (strain APS) (Acyrthosiphon pisum symbiotic bacterium).